The chain runs to 136 residues: ATP synthase epsilon chain 2 (136 aa).

It belongs to the ATPase epsilon chain family. In terms of assembly, F-type ATPases have 2 components, CF(1) - the catalytic core - and CF(0) - the membrane proton channel. CF(1) has five subunits: alpha(3), beta(3), gamma(1), delta(1), epsilon(1). CF(0) has three main subunits: a, b and c.

Its subcellular location is the cell inner membrane. Its function is as follows. Produces ATP from ADP in the presence of a proton gradient across the membrane. The sequence is that of ATP synthase epsilon chain 2 from Nitrobacter hamburgensis (strain DSM 10229 / NCIMB 13809 / X14).